A 379-amino-acid chain; its full sequence is Cytochrome b (379 aa).

A run of 4 helical transmembrane segments spans residues 33–53 (FGSL…FLAM), 77–98 (WLIR…FIHV), 113–133 (WNIG…GYVL), and 178–198 (FFAF…VHLL). Heme b is bound by residues H83 and H97. Residues H182 and H196 each coordinate heme b. H201 is a binding site for a ubiquinone. The next 4 membrane-spanning stretches (helical) occupy residues 226-246 (IKDL…ALFF), 288-308 (LGGV…PLLN), 320-340 (ITQT…WIGG), and 347-367 (FTMI…ILXP).

The protein belongs to the cytochrome b family. As to quaternary structure, the cytochrome bc1 complex contains 11 subunits: 3 respiratory subunits (MT-CYB, CYC1 and UQCRFS1), 2 core proteins (UQCRC1 and UQCRC2) and 6 low-molecular weight proteins (UQCRH/QCR6, UQCRB/QCR7, UQCRQ/QCR8, UQCR10/QCR9, UQCR11/QCR10 and a cleavage product of UQCRFS1). This cytochrome bc1 complex then forms a dimer. It depends on heme b as a cofactor.

Its subcellular location is the mitochondrion inner membrane. Functionally, component of the ubiquinol-cytochrome c reductase complex (complex III or cytochrome b-c1 complex) that is part of the mitochondrial respiratory chain. The b-c1 complex mediates electron transfer from ubiquinol to cytochrome c. Contributes to the generation of a proton gradient across the mitochondrial membrane that is then used for ATP synthesis. The sequence is that of Cytochrome b (MT-CYB) from Akodon toba (Chaco grass mouse).